The following is a 244-amino-acid chain: Probable transcriptional regulatory protein CHAB381_1426 (244 aa).

It belongs to the TACO1 family.

The protein resides in the cytoplasm. This chain is Probable transcriptional regulatory protein CHAB381_1426, found in Campylobacter hominis (strain ATCC BAA-381 / DSM 21671 / CCUG 45161 / LMG 19568 / NCTC 13146 / CH001A).